Consider the following 385-residue polypeptide: Probable thioesterase PNKD (385 aa).

Over residues 32–42 the composition is skewed to polar residues; the sequence is KASQNRTRALQ. The disordered stretch occupies residues 32-56; the sequence is KASQNRTRALQSHSSPECKEEPEPL. A Phosphoserine modification is found at valine 121. Positions 172, 174, 176, 177, 229, 253, and 291 each coordinate Zn(2+).

Belongs to the metallo-beta-lactamase superfamily. Glyoxalase II family. In terms of assembly, isoform 2 interacts with the sarcomeric proteins, MRLC2, MYOM1 and ENO3. Zn(2+) is required as a cofactor. Undergoes cleavage at the N-terminus. As to expression, expressed in many discrete areas of the brain.

The protein localises to the cell membrane. Its subcellular location is the mitochondrion. It localises to the cytoplasm. The enzyme catalyses a thioester + H2O = a thiol + a carboxylate + H(+). Functionally, probable thioesterase that may play a role in cellular detoxification processes; it likely acts on a yet-unknown alpha-hydroxythioester substrate. In vitro, it is able to catalyze the hydrolysis of S-D-lactoyl-glutathione to form glutathione and D-lactic acid at very low rate, though this reaction is not physiologically relevant in vivo. The polypeptide is Probable thioesterase PNKD (Pnkd) (Mus musculus (Mouse)).